We begin with the raw amino-acid sequence, 193 residues long: CASP-like protein 1E1 (193 aa).

Residues 1 to 30 are Cytoplasmic-facing; the sequence is MESQNKASLPVMDGLERRVVASQSEGASTC. A helical transmembrane segment spans residues 31–51; it reads DLLLRVLALVLTLAAAIVLGV. Residues 52-86 are Extracellular-facing; that stretch reads DKQTKVVPIKIVDTLPAINLPVSAKWHYLSAFTYS. A helical transmembrane segment spans residues 87 to 107; it reads VASNAIACSYAALSLVLAVSG. Topologically, residues 108 to 113 are cytoplasmic; that stretch reads KKGIMS. A helical membrane pass occupies residues 114-134; it reads IVIVLDLLMVAMLFSSNGAAL. Residues 135 to 162 are Extracellular-facing; sequence AIGLMGYQGNSHVRWTKVCHVFGRFCNQ. The chain crosses the membrane as a helical span at residues 163 to 183; it reads VAVSISLSLLGSILFLLLVGI. Over 184–193 the chain is Cytoplasmic; sequence TSLRLHKKSK.

Belongs to the Casparian strip membrane proteins (CASP) family. In terms of assembly, homodimer and heterodimers.

It localises to the cell membrane. The protein is CASP-like protein 1E1 of Populus trichocarpa (Western balsam poplar).